The chain runs to 257 residues: Imidazole glycerol phosphate synthase subunit HisF (257 aa).

Residues Asp-11 and Asp-130 contribute to the active site.

It belongs to the HisA/HisF family. In terms of assembly, heterodimer of HisH and HisF.

The protein localises to the cytoplasm. It catalyses the reaction 5-[(5-phospho-1-deoxy-D-ribulos-1-ylimino)methylamino]-1-(5-phospho-beta-D-ribosyl)imidazole-4-carboxamide + L-glutamine = D-erythro-1-(imidazol-4-yl)glycerol 3-phosphate + 5-amino-1-(5-phospho-beta-D-ribosyl)imidazole-4-carboxamide + L-glutamate + H(+). Its pathway is amino-acid biosynthesis; L-histidine biosynthesis; L-histidine from 5-phospho-alpha-D-ribose 1-diphosphate: step 5/9. Functionally, IGPS catalyzes the conversion of PRFAR and glutamine to IGP, AICAR and glutamate. The HisF subunit catalyzes the cyclization activity that produces IGP and AICAR from PRFAR using the ammonia provided by the HisH subunit. This is Imidazole glycerol phosphate synthase subunit HisF from Vibrio campbellii (strain ATCC BAA-1116).